Here is a 146-residue protein sequence, read N- to C-terminus: MNPTPLRDYQRTVHFADTDAAGVVYFANLLRFCHEAYEDALAQLGVDLRQFFSNSGLIVPITEAQIRFLKPLYCGDRLRVTIDPQRLDTSRFQLTYTLYNEGGDRVAIAQTQHMCLQLPHRQRVPIPDPLPAWLKSAPEEASDRED.

D19 is an active-site residue.

The protein belongs to the 4-hydroxybenzoyl-CoA thioesterase family. DHNA-CoA hydrolase subfamily.

It catalyses the reaction 1,4-dihydroxy-2-naphthoyl-CoA + H2O = 1,4-dihydroxy-2-naphthoate + CoA + H(+). The protein operates within cofactor biosynthesis; phylloquinone biosynthesis. Its pathway is quinol/quinone metabolism; 1,4-dihydroxy-2-naphthoate biosynthesis; 1,4-dihydroxy-2-naphthoate from chorismate: step 7/7. In terms of biological role, catalyzes the hydrolysis of 1,4-dihydroxy-2-naphthoyl-CoA (DHNA-CoA) to 1,4-dihydroxy-2-naphthoate (DHNA), a reaction involved in phylloquinone (vitamin K1) biosynthesis. The chain is 1,4-dihydroxy-2-naphthoyl-CoA hydrolase from Thermosynechococcus vestitus (strain NIES-2133 / IAM M-273 / BP-1).